A 1230-amino-acid chain; its full sequence is Cullin-associated NEDD8-dissociated protein 1 (1230 aa).

A2 is modified (N-acetylalanine). HEAT repeat units lie at residues 2 to 39 (ASAS…KDSI), 44 to 81 (DSER…KVKE), 83 to 119 (QVET…ELPP), 131 to 165 (CKKI…LSRQ), 171 to 208 (NFHP…SCGN), 210 to 247 (VFVD…QAGH), 248 to 282 (RIGE…FESF), 289 to 366 (EVYP…TRHE), 370 to 407 (EFYK…QTRP), 424 to 467 (PLTM…VLPG), 471 to 510 (QHIP…NHSP), and 515 to 552 (PHVQ…VIRP). N6-acetyllysine is present on K55. Residues 315–344 (DEDEDENAMDADGGDDDDQGSDDEYSDDDD) form a disordered region. S335 carries the post-translational modification Phosphoserine. S558 is modified (phosphoserine). HEAT repeat units lie at residues 563 to 602 (PYIK…NLGD), 606 to 643 (SDLP…LKID), 646 to 683 (PVLG…NYSD), 688 to 725 (AMID…VYPS), 729 to 768 (KISG…TGTN), 770 to 808 (LGYM…ALTR), 809 to 845 (ACPK…LGEV), 852 to 889 (SGQL…GNLP), 890 to 927 (EYLP…GLKP), 928 to 960 (YVEN…KLTL), 961 to 998 (IDPE…DHPQ), 1002 to 1039 (PLLK…NKPS), 1043 to 1097 (DLLD…DSCL), 1099 to 1133 (RLDI…LSTL), and 1140 to 1189 (QRLD…IPEA). K971 carries the N6-acetyllysine modification.

This sequence belongs to the CAND family. As to quaternary structure, interacts with TBP. Part of a complex that contains CUL1 and RBX1. Interacts with unneddylated cullins: interacts with CUL1, CUL2, CUL3, CUL4A, CUL4B and CUL5. Does not bind neddylated CUL1. Interaction with cullins is abolished in presence of COMMD1, which antagonizes with CAND1 for interacting with cullins. Interacts with ERCC6. Interacts with DCUN1D1, DCUN1D2, DCUN1D3, DCUN1D4 and DCUN1D5; these interactions are bridged by cullins and strongly inhibits the neddylation of cullins.

It localises to the cytoplasm. The protein localises to the nucleus. In terms of biological role, key assembly factor of SCF (SKP1-CUL1-F-box protein) E3 ubiquitin ligase complexes that promotes the exchange of the substrate-recognition F-box subunit in SCF complexes, thereby playing a key role in the cellular repertoire of SCF complexes. Acts as a F-box protein exchange factor. The exchange activity of CAND1 is coupled with cycles of neddylation conjugation: in the deneddylated state, cullin-binding CAND1 binds CUL1-RBX1, increasing dissociation of the SCF complex and promoting exchange of the F-box protein. Probably plays a similar role in other cullin-RING E3 ubiquitin ligase complexes. This Bos taurus (Bovine) protein is Cullin-associated NEDD8-dissociated protein 1 (CAND1).